Here is a 37-residue protein sequence, read N- to C-terminus: Large ribosomal subunit protein bL36 (37 aa).

The protein belongs to the bacterial ribosomal protein bL36 family.

The protein is Large ribosomal subunit protein bL36 of Sulfurovum sp. (strain NBC37-1).